A 210-amino-acid polypeptide reads, in one-letter code: Peroxiredoxin-5, mitochondrial (210 aa).

The N-terminal 48 residues, 1–48 (MLQLGLRVLGCKASSVLRASTCLAGRAGRKEAGWECGGARSFSSSAVT), are a transit peptide targeting the mitochondrion. The region spanning 52-210 (IKVGDAIPSV…SLAPNILSQL (159 aa)) is the Thioredoxin domain. K70 carries the N6-acetyllysine; alternate modification. Residue K70 is modified to N6-succinyllysine; alternate. K71 carries the N6-acetyllysine modification. K79 bears the N6-acetyllysine; alternate mark. The residue at position 79 (K79) is an N6-succinyllysine; alternate. C96 serves as the catalytic Cysteine sulfenic acid (-SOH) intermediate. C96 carries the S-palmitoyl cysteine lipid modification. Residues C96 and C200 are joined by a disulfide bond. An N6-succinyllysine modification is found at K112. S167 and S178 each carry phosphoserine. The short motif at 208 to 210 (SQL) is the Microbody targeting signal element.

Belongs to the peroxiredoxin family. Prx5 subfamily. In terms of assembly, monomer. In terms of processing, S-palmitoylated. Palmitoylation occurs on the active site, inhibiting its reactivity; therefore PRDX5 palmitoylation status determines its antioxidant capacity. S-palmitoylated. Depalmitoylated by ABHD10. In terms of tissue distribution, widely expressed.

The protein localises to the mitochondrion. It localises to the cytoplasm. It is found in the peroxisome matrix. The enzyme catalyses a hydroperoxide + [thioredoxin]-dithiol = an alcohol + [thioredoxin]-disulfide + H2O. Thiol-specific peroxidase that catalyzes the reduction of hydrogen peroxide and organic hydroperoxides to water and alcohols, respectively. Plays a role in cell protection against oxidative stress by detoxifying peroxides and as sensor of hydrogen peroxide-mediated signaling events. The chain is Peroxiredoxin-5, mitochondrial from Mus musculus (Mouse).